The primary structure comprises 936 residues: Pre-rRNA-processing protein FHL1 (936 aa).

Disordered regions lie at residues 1–90 (MDGE…NGNL) and 139–169 (DHSR…QDNT). The segment covering 9 to 29 (ESSNHVGTSSPTTETQFTIDS) has biased composition (polar residues). Ser-44 carries the phosphoserine modification. A compositionally biased stretch (basic and acidic residues) spans 139 to 150 (DHSREVSSKEDI). A Phosphoserine modification is found at Ser-228. Phosphothreonine occurs at positions 230 and 247. The span at 243 to 257 (PPQNTVTENNSTDAE) shows a compositional bias: polar residues. A disordered region spans residues 243 to 270 (PPQNTVTENNSTDAETTQRKLSEPIDAS). Ser-264 is subject to Phosphoserine. The FHA domain occupies 300–357 (AIIGRRSENDFSHKVDVNLGPSKSISRRHAQIFYNFGTGRFELSIIGKNGAFVDDIFV). Residues 384–395 (EQERNDDSKSPE) show a composition bias toward basic and acidic residues. A disordered region spans residues 384–442 (EQERNDDSKSPENADIAESEINTRNLKKNEPKSKKKITTGAKPKKAQTKPAVKKEKKPP). Positions 416 to 430 (SKKKITTGAKPKKAQ) are enriched in basic residues. A DNA-binding region (fork-head) is located at residues 460–552 (TKPTVSYSAM…ERQKKKQSEI (93 aa)). The interval 718–936 (AKAQHSKPIR…EVNVSLEEKL (219 aa)) is disordered. 2 stretches are compositionally biased toward polar residues: residues 742 to 753 (SQLSASASSHPN) and 765 to 777 (DPSS…QPRQ). Low complexity-rich tracts occupy residues 779–795 (ARAT…AAAS) and 815–853 (ESGT…TSSE). The span at 854–863 (SESESDSGSE) shows a compositional bias: acidic residues. Over residues 864–911 (VDEKNNKNEKIDSESIKNNESKDDIPSKDENSSNDNREISKTDEEGHD) the composition is skewed to basic and acidic residues.

The protein localises to the nucleus. Functionally, acts as a transcriptional regulator that recruits coactivator IFH1 to the promoters of ribosomal protein genes. Recruited to ribosomal gene promoters by RAP1. In Saccharomyces cerevisiae (strain ATCC 204508 / S288c) (Baker's yeast), this protein is Pre-rRNA-processing protein FHL1 (FHL1).